We begin with the raw amino-acid sequence, 401 residues long: Probable aspartate/prephenate aminotransferase (401 aa).

The L-aspartate site is built by Gly39, Trp125, and Asn175. N6-(pyridoxal phosphate)lysine is present on Lys239. Arg375 is an L-aspartate binding site.

It belongs to the class-I pyridoxal-phosphate-dependent aminotransferase family. In terms of assembly, homodimer. The cofactor is pyridoxal 5'-phosphate.

Its subcellular location is the cytoplasm. It catalyses the reaction L-aspartate + 2-oxoglutarate = oxaloacetate + L-glutamate. The catalysed reaction is L-arogenate + 2-oxoglutarate = prephenate + L-glutamate. Catalyzes the reversible conversion of aspartate and 2-oxoglutarate to glutamate and oxaloacetate. Can also transaminate prephenate in the presence of glutamate. The sequence is that of Probable aspartate/prephenate aminotransferase (aatA) from Rickettsia conorii (strain ATCC VR-613 / Malish 7).